Reading from the N-terminus, the 325-residue chain is GMP reductase (325 aa).

Cysteine 173 acts as the Thioimidate intermediate in catalysis. An NADP(+)-binding site is contributed by 202-225 (IIADGGIHEHGDIAKSIRFGATMV).

Belongs to the IMPDH/GMPR family. GuaC type 2 subfamily.

It carries out the reaction IMP + NH4(+) + NADP(+) = GMP + NADPH + 2 H(+). In terms of biological role, catalyzes the irreversible NADPH-dependent deamination of GMP to IMP. It functions in the conversion of nucleobase, nucleoside and nucleotide derivatives of G to A nucleotides, and in maintaining the intracellular balance of A and G nucleotides. The polypeptide is GMP reductase (Albidiferax ferrireducens (strain ATCC BAA-621 / DSM 15236 / T118) (Rhodoferax ferrireducens)).